The sequence spans 137 residues: uncharacterized protein (137 aa).

Residues 116 to 136 (YLSIANLATLLLFGIIGLSII) form a helical membrane-spanning segment.

The protein localises to the host membrane. This is an uncharacterized protein from His1 virus (isolate Australia/Victoria) (His1V).